We begin with the raw amino-acid sequence, 476 residues long: MLSKKPNILVIGDLMIDHYLWGSCDRISPEAPVQVVNVKKESSVLGGAGNVINNLFTLGTTVDVISVIGDDNVANELKSLLEKIKISTSNLIVENNRKTSKKSRLIASQQQVLRYDMESIDDINEESHKKIISNLEKNIKKYSSIILSDYGKGVLTTKLTQDIINIANKNSVKVLVDPKGKDYSKYKGSYTLTPNKKEAQEATNIDIKDENSLINALKDLKEKCDLEVSLITLSEQGIAIFDENLTIKPTVAREVYDVTGAGDTVIASIAFALGNDLNINEAVSFANLAAGVVVGKLGSATTTLDEIYEYESSLHKSNSNSHIKTFEEIEKLAAKLHNLGKKIVFTNGCFDILHVGHVKYLEEARSYGDVLILGLNADSSVKKLKGESRPINNQDDRAYILASLESVDYVVIFEEETPYELIKLIKPHVLVKGGDYEGKDVVGQDIADELKLVKFVDGKSTTNTIKRIQENEKCNN.

The ribokinase stretch occupies residues 1-318 (MLSKKPNILV…EYESSLHKSN (318 aa)). 195-198 (NKKE) provides a ligand contact to ATP. Residue D263 is part of the active site. Residues 345–476 (FTNGCFDILH…RIQENEKCNN (132 aa)) form a cytidylyltransferase region.

In the N-terminal section; belongs to the carbohydrate kinase PfkB family. The protein in the C-terminal section; belongs to the cytidylyltransferase family. In terms of assembly, homodimer.

It carries out the reaction D-glycero-beta-D-manno-heptose 7-phosphate + ATP = D-glycero-beta-D-manno-heptose 1,7-bisphosphate + ADP + H(+). It catalyses the reaction D-glycero-beta-D-manno-heptose 1-phosphate + ATP + H(+) = ADP-D-glycero-beta-D-manno-heptose + diphosphate. The protein operates within nucleotide-sugar biosynthesis; ADP-L-glycero-beta-D-manno-heptose biosynthesis; ADP-L-glycero-beta-D-manno-heptose from D-glycero-beta-D-manno-heptose 7-phosphate: step 1/4. It participates in nucleotide-sugar biosynthesis; ADP-L-glycero-beta-D-manno-heptose biosynthesis; ADP-L-glycero-beta-D-manno-heptose from D-glycero-beta-D-manno-heptose 7-phosphate: step 3/4. Functionally, catalyzes the phosphorylation of D-glycero-D-manno-heptose 7-phosphate at the C-1 position to selectively form D-glycero-beta-D-manno-heptose-1,7-bisphosphate. Catalyzes the ADP transfer from ATP to D-glycero-beta-D-manno-heptose 1-phosphate, yielding ADP-D-glycero-beta-D-manno-heptose. The protein is Bifunctional protein HldE of Aliarcobacter butzleri (strain RM4018) (Arcobacter butzleri).